The sequence spans 144 residues: Universal stress protein A homolog 1 (144 aa).

The protein belongs to the universal stress protein A family. As to quaternary structure, homodimer.

The protein resides in the cytoplasm. Its function is as follows. Involved in stress response. The sequence is that of Universal stress protein A homolog 1 (uspA1) from Coxiella burnetii (strain RSA 493 / Nine Mile phase I).